A 219-amino-acid chain; its full sequence is Glycosylphosphatidylinositol anchor biosynthesis protein 11 (219 aa).

At 1-45 (MPAKKRTRKTVKKTVSFSDDTTLTTHQNREKKNVDHDRPPVYVRK) the chain is on the cytoplasmic side. Position 16 is a phosphoserine (serine 16). The chain crosses the membrane as a helical span at residues 46–66 (TPLMTFPYHLVALLYYYVFVS). Position 67 (serine 67) is a topological domain, lumenal. The chain crosses the membrane as a helical span at residues 68–88 (NFNTVKLLSFLIPTQVAYLVL). Over 89–108 (QFNKCTVYGNKIIKINYSLT) the chain is Cytoplasmic. A helical transmembrane segment spans residues 109-129 (IICLGVTFLLSFPTMLLTILF). Residues 130-135 (GAPLMD) lie on the Lumenal side of the membrane. The helical transmembrane segment at 136–156 (LLWETWLLSLHFAFLAYPAVY) threads the bilayer. Residues 157–170 (SVFNCDFKVGLWKK) lie on the Cytoplasmic side of the membrane. A helical membrane pass occupies residues 171 to 191 (YFIFIVVGGWISCVVIPLDWD). Over 192 to 198 (RDWQNWP) the chain is Lumenal. Residues 199 to 217 (IPIVVGGYLGALVGYTIGA) form a helical membrane-spanning segment. At 218 to 219 (YI) the chain is on the cytoplasmic side.

This sequence belongs to the PIGF family.

The protein resides in the endoplasmic reticulum membrane. It functions in the pathway glycolipid biosynthesis; glycosylphosphatidylinositol-anchor biosynthesis. Its function is as follows. Acts in the GPI biosynthetic pathway between GlcNAc-PI synthesis and GPI transfer to protein. Required for the formation of complete GPI precursors CP1 and CP2. In Saccharomyces cerevisiae (strain ATCC 204508 / S288c) (Baker's yeast), this protein is Glycosylphosphatidylinositol anchor biosynthesis protein 11 (GPI11).